The primary structure comprises 123 residues: Large ribosomal subunit protein bL12 (123 aa).

The protein belongs to the bacterial ribosomal protein bL12 family. In terms of assembly, homodimer. Part of the ribosomal stalk of the 50S ribosomal subunit. Forms a multimeric L10(L12)X complex, where L10 forms an elongated spine to which 2 to 4 L12 dimers bind in a sequential fashion. Binds GTP-bound translation factors.

In terms of biological role, forms part of the ribosomal stalk which helps the ribosome interact with GTP-bound translation factors. Is thus essential for accurate translation. The polypeptide is Large ribosomal subunit protein bL12 (Rhodopseudomonas palustris (strain BisA53)).